Reading from the N-terminus, the 127-residue chain is LIM domain-containing protein 2 (127 aa).

Met-1 carries the post-translational modification N-acetylmethionine. Residues 1–24 (MFQAAGAAQATPSHDAKGGGSSTV) are disordered. One can recognise an LIM zinc-binding domain in the interval 38 to 98 (ETCAACQKTV…KPHFQQLFKS (61 aa)). Zn(2+) is bound by residues Cys-40, Cys-43, His-61, Cys-64, Cys-67, Cys-70, Cys-88, and His-91.

In terms of assembly, interacts with ILK.

It is found in the cytoplasm. Its subcellular location is the nucleus. In terms of biological role, acts as an activator of the protein-kinase ILK, thereby regulating cell motility. This is LIM domain-containing protein 2 from Homo sapiens (Human).